A 257-amino-acid chain; its full sequence is tRNA dimethylallyltransferase (257 aa).

15–22 (GPTASGKS) contacts ATP. 17 to 22 (TASGKS) provides a ligand contact to substrate.

This sequence belongs to the IPP transferase family. As to quaternary structure, monomer. It depends on Mg(2+) as a cofactor.

The enzyme catalyses adenosine(37) in tRNA + dimethylallyl diphosphate = N(6)-dimethylallyladenosine(37) in tRNA + diphosphate. Functionally, catalyzes the transfer of a dimethylallyl group onto the adenine at position 37 in tRNAs that read codons beginning with uridine, leading to the formation of N6-(dimethylallyl)adenosine (i(6)A). The polypeptide is tRNA dimethylallyltransferase (Oenococcus oeni (strain ATCC BAA-331 / PSU-1)).